The primary structure comprises 681 residues: Potassium-transporting ATPase ATP-binding subunit 1 (681 aa).

The next 4 helical transmembrane spans lie at 30–50 (LLVY…FFGI), 59–79 (LAIA…EAIA), 216–236 (ILLV…LPFT), and 255–275 (IALL…SIGI). The 4-aspartylphosphate intermediate role is filled by aspartate 306. Residues aspartate 343, glutamate 347, 376-383 (FTATTRMS), and lysine 394 contribute to the ATP site. Residues aspartate 517 and aspartate 521 each coordinate Mg(2+). The next 3 helical transmembrane spans lie at 587 to 607 (FAII…LNLM), 615 to 635 (AILS…PLSL), and 661 to 681 (LIAP…LGIV).

This sequence belongs to the cation transport ATPase (P-type) (TC 3.A.3) family. Type IA subfamily. In terms of assembly, the system is composed of three essential subunits: KdpA, KdpB and KdpC.

The protein resides in the cell membrane. The enzyme catalyses K(+)(out) + ATP + H2O = K(+)(in) + ADP + phosphate + H(+). Functionally, part of the high-affinity ATP-driven potassium transport (or Kdp) system, which catalyzes the hydrolysis of ATP coupled with the electrogenic transport of potassium into the cytoplasm. This subunit is responsible for energy coupling to the transport system and for the release of the potassium ions to the cytoplasm. This Listeria innocua serovar 6a (strain ATCC BAA-680 / CLIP 11262) protein is Potassium-transporting ATPase ATP-binding subunit 1.